We begin with the raw amino-acid sequence, 188 residues long: dCTP deaminase (188 aa).

DCTP contacts are provided by residues 111-116 (KSTYAR), 135-137 (TLE), Gln156, Tyr170, and Gln180. Glu137 (proton donor/acceptor) is an active-site residue.

Belongs to the dCTP deaminase family. As to quaternary structure, homotrimer.

The catalysed reaction is dCTP + H2O + H(+) = dUTP + NH4(+). It functions in the pathway pyrimidine metabolism; dUMP biosynthesis; dUMP from dCTP (dUTP route): step 1/2. In terms of biological role, catalyzes the deamination of dCTP to dUTP. This chain is dCTP deaminase, found in Marinobacter nauticus (strain ATCC 700491 / DSM 11845 / VT8) (Marinobacter aquaeolei).